We begin with the raw amino-acid sequence, 546 residues long: CTP synthase (546 aa).

The segment at 1-266 (MTTRYIFVTG…DDLVVKRFGL (266 aa)) is amidoligase domain. Residue Ser14 coordinates CTP. Ser14 provides a ligand contact to UTP. ATP-binding positions include 15 to 20 (SLGKGI) and Asp72. Asp72 and Glu140 together coordinate Mg(2+). Residues 147–149 (DIE), 187–192 (KTKPTQ), and Lys223 contribute to the CTP site. Residues 187–192 (KTKPTQ) and Lys223 each bind UTP. Residue 239 to 241 (KDV) coordinates ATP. A Glutamine amidotransferase type-1 domain is found at 291-542 (VIGMVGKYIE…VAAASAHQKR (252 aa)). Gly352 provides a ligand contact to L-glutamine. Cys379 (nucleophile; for glutamine hydrolysis) is an active-site residue. Residues 380-383 (LGMQ), Glu403, and Arg470 each bind L-glutamine. Active-site residues include His515 and Glu517.

It belongs to the CTP synthase family. In terms of assembly, homotetramer.

It catalyses the reaction UTP + L-glutamine + ATP + H2O = CTP + L-glutamate + ADP + phosphate + 2 H(+). The enzyme catalyses L-glutamine + H2O = L-glutamate + NH4(+). The catalysed reaction is UTP + NH4(+) + ATP = CTP + ADP + phosphate + 2 H(+). The protein operates within pyrimidine metabolism; CTP biosynthesis via de novo pathway; CTP from UDP: step 2/2. With respect to regulation, allosterically activated by GTP, when glutamine is the substrate; GTP has no effect on the reaction when ammonia is the substrate. The allosteric effector GTP functions by stabilizing the protein conformation that binds the tetrahedral intermediate(s) formed during glutamine hydrolysis. Inhibited by the product CTP, via allosteric rather than competitive inhibition. Catalyzes the ATP-dependent amination of UTP to CTP with either L-glutamine or ammonia as the source of nitrogen. Regulates intracellular CTP levels through interactions with the four ribonucleotide triphosphates. In Shewanella sp. (strain ANA-3), this protein is CTP synthase.